The primary structure comprises 503 residues: ATP synthase subunit alpha (503 aa).

G169 to T176 serves as a coordination point for ATP.

This sequence belongs to the ATPase alpha/beta chains family. As to quaternary structure, F-type ATPases have 2 components, CF(1) - the catalytic core - and CF(0) - the membrane proton channel. CF(1) has five subunits: alpha(3), beta(3), gamma(1), delta(1), epsilon(1). CF(0) has three main subunits: a(1), b(2) and c(9-12). The alpha and beta chains form an alternating ring which encloses part of the gamma chain. CF(1) is attached to CF(0) by a central stalk formed by the gamma and epsilon chains, while a peripheral stalk is formed by the delta and b chains.

It localises to the cell membrane. It catalyses the reaction ATP + H2O + 4 H(+)(in) = ADP + phosphate + 5 H(+)(out). Its activity is regulated as follows. Increases 2-fold following exposure to low pH. Produces ATP from ADP in the presence of a proton gradient across the membrane. The alpha chain is a regulatory subunit. In Lactobacillus acidophilus (strain ATCC 700396 / NCK56 / N2 / NCFM), this protein is ATP synthase subunit alpha.